Here is a 691-residue protein sequence, read N- to C-terminus: Threonine--tRNA ligase (691 aa).

The disordered stretch occupies residues Met1–Val22. One can recognise a TGS domain in the interval Met1–Ala73. The interval Asp268–Pro574 is catalytic. Residues Cys373, His424, and His551 each contribute to the Zn(2+) site.

It belongs to the class-II aminoacyl-tRNA synthetase family. Homodimer. It depends on Zn(2+) as a cofactor.

It localises to the cytoplasm. It catalyses the reaction tRNA(Thr) + L-threonine + ATP = L-threonyl-tRNA(Thr) + AMP + diphosphate + H(+). In terms of biological role, catalyzes the attachment of threonine to tRNA(Thr) in a two-step reaction: L-threonine is first activated by ATP to form Thr-AMP and then transferred to the acceptor end of tRNA(Thr). Also edits incorrectly charged L-seryl-tRNA(Thr). The protein is Threonine--tRNA ligase of Mycobacterium ulcerans (strain Agy99).